The following is a 554-amino-acid chain: Valerianol synthase TPS8 (554 aa).

The DDXXD motif motif lies at Gln288–Gly292. Residues Asp307, Asp311, Asp452, Ser456, and Glu460 each coordinate Mg(2+).

This sequence belongs to the terpene synthase family. It depends on Mg(2+) as a cofactor.

The enzyme catalyses (2E,6E)-farnesyl diphosphate + H2O = valerianol + diphosphate. It functions in the pathway secondary metabolite biosynthesis; terpenoid biosynthesis. In terms of biological role, terpene synthase that catalyzes the biosynthesis of the terpene valerianol. In Camellia sinensis (Tea plant), this protein is Valerianol synthase TPS8.